Reading from the N-terminus, the 370-residue chain is Glutamate 5-kinase (370 aa).

Lysine 17 lines the ATP pocket. 3 residues coordinate substrate: serine 56, aspartate 143, and asparagine 155. 175-176 (SD) is an ATP binding site. Residues 280–357 (KGEITVDAGA…DEIEGILGYP (78 aa)) enclose the PUA domain.

This sequence belongs to the glutamate 5-kinase family.

It localises to the cytoplasm. It carries out the reaction L-glutamate + ATP = L-glutamyl 5-phosphate + ADP. The protein operates within amino-acid biosynthesis; L-proline biosynthesis; L-glutamate 5-semialdehyde from L-glutamate: step 1/2. Catalyzes the transfer of a phosphate group to glutamate to form L-glutamate 5-phosphate. The chain is Glutamate 5-kinase from Paracoccus denitrificans (strain Pd 1222).